The primary structure comprises 529 residues: Laccase-1 (529 aa).

The N-terminal stretch at 1 to 23 is a signal peptide; sequence MFPGARILATLTLALHLLHGTHA. Plastocyanin-like domains are found at residues 25 to 159, 170 to 312, and 380 to 499; these read IGPT…FIVY, DVDN…ILRY, and TAPV…FAED. Asn-57 carries an N-linked (GlcNAc...) asparagine glycan. His-96, His-98, His-141, and His-143 together coordinate Cu cation. Intrachain disulfides connect Cys-117-Cys-514 and Cys-149-Cys-236. N-linked (GlcNAc...) asparagine glycosylation is found at Asn-239 and Asn-282. 7 residues coordinate Cu cation: His-425, His-428, His-430, His-481, Cys-482, His-483, and His-487.

It belongs to the multicopper oxidase family. Cu cation serves as cofactor.

It localises to the secreted. It carries out the reaction 4 hydroquinone + O2 = 4 benzosemiquinone + 2 H2O. Lignin degradation and detoxification of lignin-derived products. The protein is Laccase-1 (POX1) of Pleurotus ostreatus (Oyster mushroom).